A 326-amino-acid chain; its full sequence is Phospholipid scramblase 4 (326 aa).

The segment at 1–32 is disordered; sequence MSGLVPTAPEQPTEEMENQIKSPTAVPDAPPD. A proline-rich domain (PRD) region spans residues 1 to 94; sequence MSGLVPTAPE…PVTNQPAPIM (94 aa). Topologically, residues 1 to 299 are cytoplasmic; sequence MSGLVPTAPE…IRFPLALDVK (299 aa). Residues 18 to 25 carry the SH3-binding 1 motif; the sequence is NQIKSPTA. Positions 30–33 match the PPxY motif motif; that stretch reads PPDY. The SH3-binding 2 motif lies at 41–49; that stretch reads PAGPVASPS. 2 positions are modified to phosphotyrosine; by ABL: Y79 and Y84. The short motif at 94–102 is the SH3-binding 3 element; that stretch reads MWMAGPAPV. S-palmitoyl cysteine attachment occurs at residues C193, C194, C195, C197, and C198. The chain crosses the membrane as a helical span at residues 300 to 316; that stretch reads MKAMIFGSCFLIDFMYF. At 317–326 the chain is on the extracellular side; sequence ERPPPRRMSR.

The protein belongs to the phospholipid scramblase family. Interacts with PDCD6. Interacts with KPNA2; this interaction mediates the nucleus import of PLSCR4. Requires Ca(2+) as cofactor. The cofactor is Mg(2+). Zn(2+) is required as a cofactor.

It localises to the cell membrane. Its subcellular location is the nucleus. It carries out the reaction a 1,2-diacyl-sn-glycero-3-phosphocholine(in) = a 1,2-diacyl-sn-glycero-3-phosphocholine(out). The enzyme catalyses a 1,2-diacyl-sn-glycero-3-phospho-L-serine(in) = a 1,2-diacyl-sn-glycero-3-phospho-L-serine(out). Its function is as follows. Catalyzes metal ion-induced ATP-independent rapid bidirectional and non-specific movement of phospholipids (lipid scrambling or lipid flip-flop) between the inner and outer leaflet of the plasma membrane and participates in the redistribution of phospholipids between membrane leaflets. Metal ions bind to the calcium-binding site and induce conformation change in the protein. Has a greater affi nity for Ca(2+) than Mg(2+) and Zn(2+). This chain is Phospholipid scramblase 4, found in Mus musculus (Mouse).